The following is a 159-amino-acid chain: MGITKKPDLNDPVLRAKLAKGMGHNYYGEPAWPNDLLYIFPVVILGTIACNVGLAVLEPSMIGEPADPFATPLEILPEWYFFPVFQILRTVPNKLLGVLLMVSVPAGLLTVPFLENVNKFQNPFRRPVATTVFLVGTVVALWLGIGATLPIDKSLTLGL.

The next 3 helical transmembrane spans lie at Leu-36–Val-56, Leu-95–Glu-115, and Thr-131–Ile-151.

The protein belongs to the cytochrome b family. PetD subfamily. As to quaternary structure, the 4 large subunits of the cytochrome b6-f complex are cytochrome b6, subunit IV (17 kDa polypeptide, petD), cytochrome f and the Rieske protein, while the 4 small subunits are petG, petL, petM and petN. The complex functions as a dimer.

Its subcellular location is the plastid. It is found in the chloroplast thylakoid membrane. Component of the cytochrome b6-f complex, which mediates electron transfer between photosystem II (PSII) and photosystem I (PSI), cyclic electron flow around PSI, and state transitions. This chain is Cytochrome b6-f complex subunit 4, found in Piper cenocladum (Ant piper).